A 243-amino-acid polypeptide reads, in one-letter code: Ribosomal RNA small subunit methyltransferase J (243 aa).

Residues 112-113 (ER) and aspartate 164 contribute to the S-adenosyl-L-methionine site.

It belongs to the methyltransferase superfamily. RsmJ family.

The protein resides in the cytoplasm. It carries out the reaction guanosine(1516) in 16S rRNA + S-adenosyl-L-methionine = N(2)-methylguanosine(1516) in 16S rRNA + S-adenosyl-L-homocysteine + H(+). In terms of biological role, specifically methylates the guanosine in position 1516 of 16S rRNA. The protein is Ribosomal RNA small subunit methyltransferase J of Legionella pneumophila subsp. pneumophila (strain Philadelphia 1 / ATCC 33152 / DSM 7513).